A 246-amino-acid chain; its full sequence is MHTLFISDLHLSPKHPDITASFIQFMREEAIKADALYVLGDLFDFWIGDDDPTTFAEQIKSEFRQLTQQGVPCYFTKGNRDFLVGKRFAQQTGVQLLPDEAVIDLYGQKAVVLHGDTLCTQDTRYLEFRAKVHQPWLQRLFGLLPFALKQKLVRKIQSDIRDDKQHKSMMIMDVTPSEVIAVMHRYNVDLMIHGHTHRPAIHSIQTDDQTLKTRIVLGDWYSQSSILVYSKLTGYSLLSRPLINIE.

Mn(2+) contacts are provided by D8, H10, D41, N79, and H114. 79-80 (NR) is a substrate binding site. Residues D122, K164, K167, and H195 each coordinate substrate. Mn(2+) is bound by residues H195 and H197.

It belongs to the LpxH family. The cofactor is Mn(2+).

The protein localises to the cell inner membrane. The catalysed reaction is UDP-2-N,3-O-bis[(3R)-3-hydroxytetradecanoyl]-alpha-D-glucosamine + H2O = 2-N,3-O-bis[(3R)-3-hydroxytetradecanoyl]-alpha-D-glucosaminyl 1-phosphate + UMP + 2 H(+). Its pathway is glycolipid biosynthesis; lipid IV(A) biosynthesis; lipid IV(A) from (3R)-3-hydroxytetradecanoyl-[acyl-carrier-protein] and UDP-N-acetyl-alpha-D-glucosamine: step 4/6. Hydrolyzes the pyrophosphate bond of UDP-2,3-diacylglucosamine to yield 2,3-diacylglucosamine 1-phosphate (lipid X) and UMP by catalyzing the attack of water at the alpha-P atom. Involved in the biosynthesis of lipid A, a phosphorylated glycolipid that anchors the lipopolysaccharide to the outer membrane of the cell. The chain is UDP-2,3-diacylglucosamine hydrolase from Vibrio cholerae serotype O1 (strain ATCC 39541 / Classical Ogawa 395 / O395).